A 416-amino-acid chain; its full sequence is Interleukin-1 receptor type 2 (416 aa).

The N-terminal stretch at 1-13 is a signal peptide; it reads MFILLVLVTGVSA. Topologically, residues 14 to 355 are extracellular; the sequence is FTTPAVVHTG…FQSLHTTVKE (342 aa). Ig-like C2-type domains lie at 29-136, 146-233, and 249-357; these read PVTS…LELK, PLVS…YNIT, and PVII…KEVS. Intrachain disulfides connect Cys42–Cys128, Cys64–Cys120, and Cys164–Cys219. 4 N-linked (GlcNAc...) asparagine glycosylation sites follow: Asn124, Asn208, Asn231, and Asn289. Cys270 and Cys338 are joined by a disulfide. Residues 356 to 381 form a helical membrane-spanning segment; sequence VSSTFSWGIALAPLSLIILVVGAIWI. At 382-416 the chain is on the cytoplasmic side; the sequence is RRRCKRQAGKTYGLTKLPTDNQDFPSSPNQIKEMK. Residues 396 to 416 are disordered; that stretch reads TKLPTDNQDFPSSPNQIKEMK. Residues 399–416 are compositionally biased toward polar residues; sequence PTDNQDFPSSPNQIKEMK.

It belongs to the interleukin-1 receptor family. Associates with IL1RAP to form a non-signaling interleukin-1 receptor complex. In terms of processing, a soluble form (sIL1R2) can also be produced by proteolytic cleavage at the cell surface (shedding) involving a metalloproteinase.

The protein resides in the membrane. It is found in the cell membrane. It localises to the secreted. Functionally, non-signaling receptor for IL1A, IL1B and IL1RN. Reduces IL1B activities. Serves as a decoy receptor by competitive binding to IL1B and preventing its binding to IL1R1. Also modulates cellular response through non-signaling association with IL1RAP after binding to IL1B. IL1R2 (membrane and secreted forms) preferentially binds IL1B and poorly IL1A and IL1RN. The secreted IL1R2 recruits secreted IL1RAP with high affinity; this complex formation may be the dominant mechanism for neutralization of IL1B by secreted/soluble receptors. In Rattus norvegicus (Rat), this protein is Interleukin-1 receptor type 2 (Il1r2).